A 744-amino-acid chain; its full sequence is Catalase-peroxidase (744 aa).

Positions Met1 to Ala22 are cleaved as a signal peptide. A cross-link (tryptophyl-tyrosyl-methioninium (Trp-Tyr) (with M-260)) is located at residues Trp114–Tyr234. Catalysis depends on His115, which acts as the Proton acceptor. The tryptophyl-tyrosyl-methioninium (Tyr-Met) (with W-114) cross-link spans Tyr234–Met260. Heme b is bound at residue His275.

This sequence belongs to the peroxidase family. Peroxidase/catalase subfamily. As to quaternary structure, homodimer or homotetramer. Requires heme b as cofactor. Formation of the three residue Trp-Tyr-Met cross-link is important for the catalase, but not the peroxidase activity of the enzyme.

It carries out the reaction H2O2 + AH2 = A + 2 H2O. It catalyses the reaction 2 H2O2 = O2 + 2 H2O. Bifunctional enzyme with both catalase and broad-spectrum peroxidase activity. This is Catalase-peroxidase from Azorhizobium caulinodans (strain ATCC 43989 / DSM 5975 / JCM 20966 / LMG 6465 / NBRC 14845 / NCIMB 13405 / ORS 571).